Here is a 172-residue protein sequence, read N- to C-terminus: uncharacterized protein (172 aa).

Low complexity predominate over residues 1-28 (MAAAGVTAKAGGGTSAAAASLIRARSPA). A disordered region spans residues 1–172 (MAAAGVTAKA…GGRRSGRDAG (172 aa)). Basic residues predominate over residues 58–68 (PRRRSRARRGH). The segment covering 80 to 100 (TVGGEGQASQIGGGGGGGGGR) has biased composition (gly residues). The span at 129-138 (PGLASSPGVA) shows a compositional bias: low complexity. The segment covering 139–165 (PAGGSGGLWSGAGLCSGLGARGFPGGR) has biased composition (gly residues).

This is an uncharacterized protein from Homo sapiens (Human).